The chain runs to 3957 residues: Ankyrin-2 (3957 aa).

Residues Met-1–Glu-14 show a composition bias toward basic and acidic residues. The disordered stretch occupies residues Met-1–Ser-34. ANK repeat units lie at residues Asp-30–Gln-62, Asn-63–Ser-92, Lys-96–Ala-125, Asn-129–Thr-158, Asp-162–Val-191, Leu-193–Val-220, Ser-232–Phe-261, Asn-265–Ala-294, Asp-298–Ala-327, Asn-331–Asp-360, Asp-364–Ala-393, Asn-397–Ala-426, Ser-430–Val-459, Arg-463–Ala-492, Glu-496–Ala-525, Asn-529–Leu-558, Lys-562–Ser-591, Asn-595–Ala-624, Asn-628–Ile-657, Gln-661–Met-690, Ser-694–Ala-723, Leu-727–Ala-756, Asn-760–Ala-789, and Asn-793–Thr-822. 2 positions are modified to phosphoserine: Ser-31 and Ser-34. Tyr-378 is modified (phosphotyrosine). Position 531 is a phosphotyrosine (Tyr-531). Position 846 is a phosphoserine (Ser-846). Phosphothreonine is present on Thr-853. Ser-874 is subject to Phosphoserine. The interval Ser-966–Asp-1125 is interaction with SPTBN1. ZU5 domains are found at residues Phe-968 to Arg-1156 and Lys-1158 to Cys-1304. Residues Val-1289–Glu-1423 are UPA domain. Residue Tyr-1382 is modified to Phosphotyrosine. The 86-residue stretch at Ile-1450 to Lys-1535 folds into the Death 1 domain. The segment at Lys-1457–Val-1486 is disordered. Residues Ser-1459, Ser-1461, Ser-1473, Ser-1500, and Ser-1596 each carry the phosphoserine modification. Residues Ser-1461 to Met-1471 are compositionally biased toward acidic residues. Disordered regions lie at residues Ala-1670–Ser-2137, Ala-2197–Leu-2411, Ala-2430–Pro-2484, Ser-2507–Glu-2586, Glu-2604–His-2852, Asp-2864–Phe-2904, and Gln-2923–Thr-2951. 2 stretches are compositionally biased toward basic and acidic residues: residues Ser-1674–Pro-1683 and Lys-1711–Ser-1733. A phosphoserine mark is found at Ser-1732, Ser-1733, and Ser-1736. Residues Ile-1766–Gly-1783 are compositionally biased toward basic and acidic residues. Repeat A repeat units follow at residues His-1806–Arg-1817, His-1818–Arg-1829, His-1830–Arg-1841, His-1842–Lys-1853, His-1854–Arg-1865, His-1866–Lys-1877, and His-1878–Arg-1889. Residues His-1806–Arg-1983 are repeat-rich region. Residues Ser-1855 and Ser-1858 each carry the phosphoserine modification. Basic and acidic residues-rich tracts occupy residues Lys-1886–Pro-1902 and Arg-1921–Leu-1937. One copy of the Repeat A; approximate repeat lies at His-1890–Arg-1900. Repeat A repeat units follow at residues His-1901–Lys-1912 and Arg-1913–Lys-1924. A Repeat A; approximate repeat occupies His-1925–Lys-1935. Ser-1929 is subject to Phosphoserine. 4 Repeat A repeats span residues Arg-1936–Lys-1947, His-1948–Lys-1959, His-1960–Lys-1971, and Gln-1972–Arg-1983. Composition is skewed to basic and acidic residues over residues Lys-1980–Met-1994, Pro-2003–Gly-2034, Val-2075–Pro-2093, and Glu-2102–Asp-2117. Ser-2127 is modified (phosphoserine). Over residues Pro-2128–Ser-2137 the composition is skewed to basic and acidic residues. Thr-2239 bears the Phosphothreonine mark. Residues Pro-2240–Pro-2251 show a composition bias toward polar residues. Position 2243 is a phosphoserine (Ser-2243). The span at Lys-2252–Thr-2282 shows a compositional bias: basic and acidic residues. A Phosphothreonine modification is found at Thr-2269. The residue at position 2275 (Ser-2275) is a Phosphoserine. A compositionally biased stretch (polar residues) spans Thr-2355–Ser-2376. Residues Ser-2405, Ser-2440, Ser-2454, Ser-2516, and Ser-2521 each carry the phosphoserine modification. Residues Glu-2523–Glu-2545 are compositionally biased toward polar residues. 2 stretches are compositionally biased toward basic and acidic residues: residues Asn-2576–Glu-2586 and Glu-2604–Glu-2619. Thr-2583 is modified (phosphothreonine). A phosphoserine mark is found at Ser-2679 and Ser-2701. A compositionally biased stretch (low complexity) spans Pro-2696–Pro-2705. The span at Glu-2729–Gly-2776 shows a compositional bias: basic and acidic residues. A phosphoserine mark is found at Ser-2781 and Ser-2795. Low complexity predominate over residues Ser-2781–Ser-2791. A compositionally biased stretch (polar residues) spans Ser-2892 to Arg-2903. Position 2956 is a phosphoserine (Ser-2956). 3 disordered regions span residues Asn-2987–Glu-3016, Leu-3069–Asn-3099, and Gln-3136–Glu-3462. Over residues Gln-2998–Glu-3016 the composition is skewed to polar residues. Ser-3075 is modified (phosphoserine). Phosphothreonine is present on Thr-3078. Positions Thr-3078–Thr-3087 are enriched in low complexity. Over residues Glu-3090 to Asn-3099 the composition is skewed to polar residues. Over residues Glu-3137–Glu-3149 the composition is skewed to basic and acidic residues. A compositionally biased stretch (low complexity) spans Leu-3157–Ser-3169. The segment covering Val-3175–Pro-3194 has biased composition (acidic residues). Polar residues-rich tracts occupy residues Ala-3198–Thr-3212 and Leu-3256–Val-3265. 3 positions are modified to phosphoserine: Ser-3273, Ser-3276, and Ser-3277. Residues Glu-3335–Pro-3344 show a composition bias toward basic and acidic residues. The span at Val-3357–Pro-3374 shows a compositional bias: polar residues. Phosphoserine is present on residues Ser-3390 and Ser-3409. A compositionally biased stretch (basic and acidic residues) spans Ser-3409–Glu-3423. Over residues Ser-3446–Thr-3460 the composition is skewed to low complexity. At Ser-3474 the chain carries Phosphoserine. The region spanning Ile-3569–Thr-3653 is the Death 2 domain. Ser-3735 carries the phosphoserine modification. Residues Thr-3776, Thr-3797, Thr-3803, and Thr-3814 each carry the phosphothreonine modification. The interval Pro-3777–Thr-3858 is disordered. At Ser-3823 the chain carries Phosphoserine. A compositionally biased stretch (basic and acidic residues) spans Pro-3832–Pro-3841. Residue Ser-3909 is modified to Phosphoserine.

In terms of assembly, interacts with RHBG and SPTBN1. Colocalizes with Na/K ATPase, Na/Ca exchanger and SPTBN1. Directly interacts with DMD; this interaction is necessary for DMD localization at the sarcolemma. Interacts with DCTN4; this interaction is required for DCTN4 retention at costameres. Identified in complexes that contain VIM, EZR, AHNAK, BFSP1, BFSP2, ANK2, PLEC, PRX and spectrin. Interacts (via death domain) with RABGAP1L (via Rab-GAP TBC domain). Phosphorylated at multiple sites by different protein kinases and each phosphorylation event regulates the protein's structure and function. In terms of tissue distribution, present in plasma membrane of neurons as well as glial cells throughout the brain. Expressed in fetal brain and in temporal cortex of adult brain. Also expressed in the inner segments of rod photoreceptors in retina.

It localises to the cytoplasm. The protein resides in the cytoskeleton. It is found in the membrane. The protein localises to the myofibril. Its subcellular location is the sarcomere. It localises to the m line. The protein resides in the apical cell membrane. It is found in the cell membrane. The protein localises to the postsynaptic cell membrane. Its subcellular location is the early endosome. It localises to the recycling endosome. The protein resides in the lysosome. It is found in the mitochondrion. The protein localises to the z line. Its subcellular location is the sarcolemma. It localises to the T-tubule. Functionally, plays an essential role in the localization and membrane stabilization of ion transporters and ion channels in several cell types, including cardiomyocytes, as well as in striated muscle cells. In skeletal muscle, required for proper localization of DMD and DCTN4 and for the formation and/or stability of a special subset of microtubules associated with costameres and neuromuscular junctions. In cardiomyocytes, required for coordinate assembly of Na/Ca exchanger, SLC8A1/NCX1, Na/K ATPases ATP1A1 and ATP1A2 and inositol 1,4,5-trisphosphate (InsP3) receptors at sarcoplasmic reticulum/sarcolemma sites. Required for expression and targeting of SPTBN1 in neonatal cardiomyocytes and for the regulation of neonatal cardiomyocyte contraction rate. In the inner segment of rod photoreceptors, required for the coordinated expression of the Na/K ATPase, Na/Ca exchanger and beta-2-spectrin (SPTBN1). Plays a role in endocytosis and intracellular protein transport. Associates with phosphatidylinositol 3-phosphate (PI3P)-positive organelles and binds dynactin to promote long-range motility of cells. Recruits RABGAP1L to (PI3P)-positive early endosomes, where RABGAP1L inactivates RAB22A, and promotes polarized trafficking to the leading edge of the migrating cells. Part of the ANK2/RABGAP1L complex which is required for the polarized recycling of fibronectin receptor ITGA5 ITGB1 to the plasma membrane that enables continuous directional cell migration. The sequence is that of Ankyrin-2 (ANK2) from Homo sapiens (Human).